The chain runs to 142 residues: Negative cofactor 2 complex subunit alpha (142 aa).

The span at 1-11 shows a compositional bias: polar residues; the sequence is MADQVPVTTQL. A disordered region spans residues 1-43; that stretch reads MADQVPVTTQLPPIKPEHEVPLDAGGSPVGNMGTNSNNNNELG. A Phosphoserine modification is found at Ser-27. The region spanning 29-137 is the Histone-fold domain; that stretch reads VGNMGTNSNN…LCVEEGQTQP (109 aa). Phosphoserine is present on Ser-141.

It belongs to the NC2 alpha/DRAP1 family. As to quaternary structure, component of the NC2 (negative cofactor 2) complex composed of BUR6 and NCB2. The NC2 complex associates with SPT15/TBP. Interacts with SPT15/TBP.

It is found in the nucleus. Functionally, component of the NC2 complex which represses RNA polymerase II transcription through binding to SPT15/TBP and thereby inhibiting the assembly of the preinitiation complex. The NC2 complex may also mediate transcriptional activation from TATA-driven promoters through association with SPT15/TBP. The protein is Negative cofactor 2 complex subunit alpha (BUR6) of Saccharomyces cerevisiae (strain ATCC 204508 / S288c) (Baker's yeast).